A 198-amino-acid chain; its full sequence is MVTTYLLFIVAYLLGSIPFALVVGKIGYGIDIREHGSGNLGGTNTFRTLGKKAGFTVTIADILKGTLATSLPMIFGLDIHPLWFGLAAVLGHVYPIFAKFRGGKAVATSAGVLLCYSPVVFAILAVVFFTLLFTTRYVSLSSMVTAVVAVIASIVSGDKIFIIAMCLLAGMVIYKHRANIGRIINKTEPKANFSKKQK.

Transmembrane regions (helical) follow at residues 4-24 (TYLL…LVVG), 71-91 (LPMI…AVLG), 113-133 (LLCY…TLLF), and 147-167 (VVAV…AMCL).

Belongs to the PlsY family. In terms of assembly, probably interacts with PlsX.

It is found in the cell membrane. The enzyme catalyses an acyl phosphate + sn-glycerol 3-phosphate = a 1-acyl-sn-glycero-3-phosphate + phosphate. Its pathway is lipid metabolism; phospholipid metabolism. In terms of biological role, catalyzes the transfer of an acyl group from acyl-phosphate (acyl-PO(4)) to glycerol-3-phosphate (G3P) to form lysophosphatidic acid (LPA). This enzyme utilizes acyl-phosphate as fatty acyl donor, but not acyl-CoA or acyl-ACP. The chain is Glycerol-3-phosphate acyltransferase from Bacillus cereus (strain G9842).